We begin with the raw amino-acid sequence, 234 residues long: MTNPISQAAGALSQDELKTLVGQAALQYVAPGEIVGVGTGSTVNKFIDALASIRHLIKGAVSSSEASTLRLKALGIPVFDANEVAELSVYIDGADEIDGHGNMIKGGGAALTREKIVAALANQFVCIADESKLVQTLGRYPLPVEIIPMAAQRITQQFAALGGRAQVRLKGDQPLVTDNGQILLDVTGLQISDPLAFETLVSQWPGVVTVGVFAYQKAQVCLLGTARGVKTLTF.

Substrate contacts are provided by residues 39 to 42 (TGST), 92 to 95 (DGAD), and 105 to 108 (KGGG). E114 serves as the catalytic Proton acceptor. K132 contacts substrate.

It belongs to the ribose 5-phosphate isomerase family. As to quaternary structure, homodimer.

It catalyses the reaction aldehydo-D-ribose 5-phosphate = D-ribulose 5-phosphate. Its pathway is carbohydrate degradation; pentose phosphate pathway; D-ribose 5-phosphate from D-ribulose 5-phosphate (non-oxidative stage): step 1/1. Catalyzes the reversible conversion of ribose-5-phosphate to ribulose 5-phosphate. In Albidiferax ferrireducens (strain ATCC BAA-621 / DSM 15236 / T118) (Rhodoferax ferrireducens), this protein is Ribose-5-phosphate isomerase A.